We begin with the raw amino-acid sequence, 260 residues long: Triosephosphate isomerase (260 aa).

11-13 (NWK) lines the substrate pocket. Catalysis depends on His-103, which acts as the Electrophile. Glu-175 serves as the catalytic Proton acceptor. Residues Gly-181, Ser-220, and 241–242 (GG) contribute to the substrate site.

Belongs to the triosephosphate isomerase family. As to quaternary structure, homodimer.

The protein resides in the cytoplasm. It carries out the reaction D-glyceraldehyde 3-phosphate = dihydroxyacetone phosphate. Its pathway is carbohydrate biosynthesis; gluconeogenesis. It functions in the pathway carbohydrate degradation; glycolysis; D-glyceraldehyde 3-phosphate from glycerone phosphate: step 1/1. Functionally, involved in the gluconeogenesis. Catalyzes stereospecifically the conversion of dihydroxyacetone phosphate (DHAP) to D-glyceraldehyde-3-phosphate (G3P). This Shewanella sp. (strain MR-7) protein is Triosephosphate isomerase.